Reading from the N-terminus, the 277-residue chain is Phosphatidylglycerol--prolipoprotein diacylglyceryl transferase (277 aa).

The next 4 helical transmembrane spans lie at 11–31 (IIFS…LISF), 55–75 (LLYI…IIFY), 93–113 (GGMS…YLSL), and 117–137 (VKIL…LGAG). A 1,2-diacyl-sn-glycero-3-phospho-(1'-sn-glycerol) is bound at residue Arg-138. 3 helical membrane-spanning segments follow: residues 192–212 (PSQL…IYFF), 220–240 (GSIS…SEFF), and 256–276 (MGQI…NLFI).

It belongs to the Lgt family.

It is found in the cell inner membrane. The enzyme catalyses L-cysteinyl-[prolipoprotein] + a 1,2-diacyl-sn-glycero-3-phospho-(1'-sn-glycerol) = an S-1,2-diacyl-sn-glyceryl-L-cysteinyl-[prolipoprotein] + sn-glycerol 1-phosphate + H(+). It functions in the pathway protein modification; lipoprotein biosynthesis (diacylglyceryl transfer). In terms of biological role, catalyzes the transfer of the diacylglyceryl group from phosphatidylglycerol to the sulfhydryl group of the N-terminal cysteine of a prolipoprotein, the first step in the formation of mature lipoproteins. The sequence is that of Phosphatidylglycerol--prolipoprotein diacylglyceryl transferase from Buchnera aphidicola subsp. Schizaphis graminum (strain Sg).